Reading from the N-terminus, the 385-residue chain is Endoglucanase 1 (385 aa).

The first 17 residues, 1-17 (MKLVFSALASLLSGASA), serve as a signal peptide directing secretion. 2 N-linked (GlcNAc...) asparagine glycosylation sites follow: Asn93 and Asn140. Glu176 functions as the Proton donor in the catalytic mechanism. N-linked (GlcNAc...) asparagine glycans are attached at residues Asn200 and Asn237. Glu284 functions as the Nucleophile in the catalytic mechanism. N-linked (GlcNAc...) asparagine glycans are attached at residues Asn289 and Asn331.

This sequence belongs to the glycosyl hydrolase 5 (cellulase A) family.

The catalysed reaction is Endohydrolysis of (1-&gt;4)-beta-D-glucosidic linkages in cellulose, lichenin and cereal beta-D-glucans.. The protein operates within glycan metabolism; cellulose degradation. Functionally, active towards carboxymethyl cellulose. This chain is Endoglucanase 1 (eg 1), found in Robillarda sp. (strain Y-20).